The sequence spans 518 residues: MWKWKVILLFLAEMFVSGVNGDCACYEANNVTGKSAPISNSYMTEDFSPCYLPCSYVAYSGDETYGWTGLVLNWKTTTNSGGIIQIFDGPSATGTPIIQVAEGETIAAGIGKSLIKSSLPVITIKYSQTGSGASMFILNINNGTFVTNVYYGSISTAAGLAPIAVSTTTTAMPTTRSYSNPNFAYDPYFITHDIFVVINQRTSGGMAALTSLNALAINFVTLLSTTTDINSVSSSRLSLATLTPYDPYYSVQGGIWELSATDVLNNVPRSGVTIEGDIDSALIGLADLAFTVNKNASTDTRNNVQRSVVLLTAEWPSNALLGDNVASKFTELGLNLLVVGYNLTDAETSQLLRTDRWYNAINSSDSKITNVAAFVNPFYFNNGANNFWCPPFGITNSVDGTYSWFQEPYNYTGPHGINGVWTDPFDGQTGRYCNFANNQYVYQNNAGGSVKVQVYFELEAGKDFLNFYDASNNLIASFTGYEIAGSSFFTSTTTLTARFTSDNKSIFRGFWVSITPQP.

Positions 1-21 are cleaved as a signal peptide; that stretch reads MWKWKVILLFLAEMFVSGVNG. Asn-30, Asn-142, Asn-295, Asn-342, Asn-362, Asn-410, and Asn-503 each carry an N-linked (GlcNAc...) asparagine glycan. Residues 389–517 form the CUB domain; that stretch reads CPPFGITNSV…RGFWVSITPQ (129 aa).

It is found in the secreted. This is an uncharacterized protein from Caenorhabditis elegans.